Consider the following 293-residue polypeptide: Glycine--tRNA ligase alpha subunit (293 aa).

It belongs to the class-II aminoacyl-tRNA synthetase family. In terms of assembly, tetramer of two alpha and two beta subunits.

It is found in the cytoplasm. It carries out the reaction tRNA(Gly) + glycine + ATP = glycyl-tRNA(Gly) + AMP + diphosphate. The sequence is that of Glycine--tRNA ligase alpha subunit from Acaryochloris marina (strain MBIC 11017).